Reading from the N-terminus, the 703-residue chain is Methionine--tRNA ligase (703 aa).

Positions 15–25 match the 'HIGH' region motif; that stretch reads PYANGPVHLGH. Cys147, Cys150, Cys160, and Cys163 together coordinate Zn(2+). Residues 345–349 carry the 'KMSKS' region motif; it reads KFSKS. An ATP-binding site is contributed by Lys348. One can recognise a tRNA-binding domain in the interval 602 to 703; it reads DFQKIDLRVA…GEGINGNSVS (102 aa).

Belongs to the class-I aminoacyl-tRNA synthetase family. MetG type 1 subfamily. In terms of assembly, homodimer. The cofactor is Zn(2+).

The protein localises to the cytoplasm. The catalysed reaction is tRNA(Met) + L-methionine + ATP = L-methionyl-tRNA(Met) + AMP + diphosphate. Is required not only for elongation of protein synthesis but also for the initiation of all mRNA translation through initiator tRNA(fMet) aminoacylation. The sequence is that of Methionine--tRNA ligase from Chlorobaculum tepidum (strain ATCC 49652 / DSM 12025 / NBRC 103806 / TLS) (Chlorobium tepidum).